The following is a 496-amino-acid chain: Cyclin-L1 (496 aa).

Cyclin-like regions lie at residues 68–170 (ELIQ…RILK) and 183–267 (KIIV…TTLR). Positions 301 to 496 (NPDGTPAILS…SHSGHGRHRR (196 aa)) are disordered. A compositionally biased stretch (basic and acidic residues) spans 322-347 (SPRDVKTEEKSPNFAKVKREMDDKQS). Basic residues-rich tracts occupy residues 358–392 (ENKRSRSVSRSRSRTKSRSRSHSPRRHYNNRRRSR), 412–426 (RRHHNHGSPHMKLKH), 434–446 (RHAHKRKKSHSPS), and 456–468 (KKHRHEHGHHRER). Residues 363–406 (RSVSRSRSRTKSRSRSHSPRRHYNNRRRSRSGTYSSRSRSRSRS) form an RS region. Residues 469 to 478 (RERSRSFERS) show a composition bias toward basic and acidic residues. The segment covering 479–496 (HKNKHHGSSHSGHGRHRR) has biased composition (basic residues).

This sequence belongs to the cyclin family. Cyclin L subfamily.

It is found in the nucleus speckle. Its subcellular location is the nucleus. It localises to the nucleoplasm. Its function is as follows. Involved in pre-mRNA splicing. The protein is Cyclin-L1 (ccnl1) of Xenopus laevis (African clawed frog).